Here is a 40-residue protein sequence, read N- to C-terminus: Photosystem II reaction center protein J (40 aa).

Residues 8–28 (IPLWMIGTLAGILVISLIGIF) traverse the membrane as a helical segment.

It belongs to the PsbJ family. As to quaternary structure, PSII is composed of 1 copy each of membrane proteins PsbA, PsbB, PsbC, PsbD, PsbE, PsbF, PsbH, PsbI, PsbJ, PsbK, PsbL, PsbM, PsbT, PsbX, PsbY, PsbZ, Psb30/Ycf12, at least 3 peripheral proteins of the oxygen-evolving complex and a large number of cofactors. It forms dimeric complexes.

Its subcellular location is the plastid membrane. In terms of biological role, one of the components of the core complex of photosystem II (PSII). PSII is a light-driven water:plastoquinone oxidoreductase that uses light energy to abstract electrons from H(2)O, generating O(2) and a proton gradient subsequently used for ATP formation. It consists of a core antenna complex that captures photons, and an electron transfer chain that converts photonic excitation into a charge separation. The protein is Photosystem II reaction center protein J of Cuscuta gronovii (Common dodder).